Reading from the N-terminus, the 362-residue chain is Small ribosomal subunit protein uS4m (362 aa).

The 75-residue stretch at 105–179 (TRFDVILLRL…FYKEILVEKI (75 aa)) folds into the S4 RNA-binding domain.

This sequence belongs to the universal ribosomal protein uS4 family. In terms of assembly, component of the mitochondrial ribosome small subunit.

It is found in the mitochondrion. In Arabidopsis thaliana (Mouse-ear cress), this protein is Small ribosomal subunit protein uS4m (RPS4).